The following is a 182-amino-acid chain: tRNA-splicing endonuclease (182 aa).

Active-site residues include Tyr-119, His-127, and Lys-158.

This sequence belongs to the tRNA-intron endonuclease family. Archaeal short subfamily. As to quaternary structure, homotetramer; although the tetramer contains four active sites, only two participate in the cleavage. Therefore, it should be considered as a dimer of dimers.

The catalysed reaction is pretRNA = a 3'-half-tRNA molecule with a 5'-OH end + a 5'-half-tRNA molecule with a 2',3'-cyclic phosphate end + an intron with a 2',3'-cyclic phosphate and a 5'-hydroxyl terminus.. In terms of biological role, endonuclease that removes tRNA introns. Cleaves pre-tRNA at the 5'- and 3'-splice sites to release the intron. The products are an intron and two tRNA half-molecules bearing 2',3' cyclic phosphate and 5'-OH termini. Recognizes a pseudosymmetric substrate in which 2 bulged loops of 3 bases are separated by a stem of 4 bp. The sequence is that of tRNA-splicing endonuclease from Saccharolobus islandicus (strain M.16.27) (Sulfolobus islandicus).